The chain runs to 259 residues: 5'-nucleotidase SurE (259 aa).

Positions 13, 14, 44, and 101 each coordinate a divalent metal cation.

Belongs to the SurE nucleotidase family. A divalent metal cation is required as a cofactor.

The protein resides in the cytoplasm. It catalyses the reaction a ribonucleoside 5'-phosphate + H2O = a ribonucleoside + phosphate. In terms of biological role, nucleotidase that shows phosphatase activity on nucleoside 5'-monophosphates. The sequence is that of 5'-nucleotidase SurE from Flavobacterium johnsoniae (strain ATCC 17061 / DSM 2064 / JCM 8514 / BCRC 14874 / CCUG 350202 / NBRC 14942 / NCIMB 11054 / UW101) (Cytophaga johnsonae).